Reading from the N-terminus, the 1076-residue chain is MHIATFPALAITALALVLWATVATHSSNTNSCHMSYMKPDMIAMTGFNTTQTPLAHKYSLHLYRELDVDLSREVGGRPVLFVPGNGGSMRQIRSIAGEAAVQYWHDPRRAGADADTWANGSTARPKSALQKLNTFAFGDTESDTEGVRGLGDAVTARDMSGDDRRDAVERPLSNGKLPSQWPDDLPLDFFTVNFQEDLTAFDGTTVIDQAEYLNQAIAYILSLYSSHPNPPTSVIVIGHSMGGIVARTMVTLDSYIHGSINTILTLATPHVLPPVSFDKGIVGLYHNVNEFWKTETVPGGKLEDTLLVSVTGGIRDQMIPAEYSSVDTFLPPTNGFAVATTSIPDVWMSIDHQAMVWCHQLRRVVAETLLVVAGETTEKVSTRLDTFQEYFLSGMERVEKKAQNASESSKLTLDTLVSINTPLTTTSNIIINDHSPNQLVKTKSYFKFPVLKASEINEMSRSFAMPVDKGKSLLVKTNMPLEDLHILVCRTNTGDVDTNGFSFLRYGSKSKGVRVGTDTLVCANVAGEAVAMPSSIKYATGAKIPEEEETGEDNDIPVDSAISSTSLSEYIQLDASSLSGFQYVVVIDNTMSETISSDSYLLAEMALPSDMAVVAAPTWWEVLKVGRFTIELPEKRALLTKISLPHFWSSLVAFSIRLSTSDSFSMEYQCEAKKSMGSEHDVLFAPLLMQYSAQLHEAKFSTNLCGGYEQGTRVAVHGGAPYMPLAEGRDVSGTELYLWTDSSSRSSESLSLTLEIDLWGSLGRFLGFYRVMFAIFPMFVFLCLLMIQLRVWTTTELFVSLSDALDVFVDFQLPWILAGSCAIPFVPHVLVSLLYPQMSQPGQFFLGLNGTHLWFLGPVSLVIATGIVVVLHWLLQILTLWVCQCYYMLGLAPIAPESPFSVRRIVTISFLLLLVFKIVPHQFAFMVAVLVMAMGAGKARVGRLMQSEDKDNKSEPCVVIDRNLINYTHSLLLLLVLLLPINAPTLVVWLHNMANKWHTPLESHHEVSAILPILLLVLTASRGIMIRLPQSKRAIYATFAFLAYFALFVLFHGVVHSYRLHLLTNGLCLCLLYLSL.

Residues 3–23 (IATFPALAITALALVLWATVA) form a helical membrane-spanning segment. Asparagine 48 and asparagine 119 each carry an N-linked (GlcNAc...) asparagine glycan. Serine 240 is an active-site residue. Asparagine 404 carries an N-linked (GlcNAc...) asparagine glycan. 2 helical membrane passes run 765–785 (FLGF…LCLL) and 815–835 (WILA…SLLY). Residue asparagine 849 is glycosylated (N-linked (GlcNAc...) asparagine). The next 3 membrane-spanning stretches (helical) occupy residues 855–875 (FLGP…HWLL), 877–897 (ILTL…IAPE), and 910–930 (FLLL…VAVL). Asparagine 952 and asparagine 966 each carry an N-linked (GlcNAc...) asparagine glycan. 3 helical membrane passes run 970 to 990 (SLLL…VVWL), 1006 to 1026 (EVSA…GIMI), and 1035 to 1055 (IYAT…HGVV).

Belongs to the GPI inositol-deacylase family.

Its subcellular location is the endoplasmic reticulum membrane. Its function is as follows. Involved in inositol deacylation of GPI-anchored proteins which plays important roles in the quality control and ER-associated degradation of GPI-anchored proteins. The polypeptide is GPI inositol-deacylase A (BST1A) (Yarrowia lipolytica (strain CLIB 122 / E 150) (Yeast)).